Reading from the N-terminus, the 886-residue chain is DNA mismatch repair protein MutS (886 aa).

An ATP-binding site is contributed by 627 to 634 (GPNMGGKS). A disordered region spans residues 834-857 (VECADAPAPSDATHPALDRLRDID).

Belongs to the DNA mismatch repair MutS family.

Its function is as follows. This protein is involved in the repair of mismatches in DNA. It is possible that it carries out the mismatch recognition step. This protein has a weak ATPase activity. In Burkholderia vietnamiensis (strain G4 / LMG 22486) (Burkholderia cepacia (strain R1808)), this protein is DNA mismatch repair protein MutS.